Reading from the N-terminus, the 375-residue chain is Alcohol dehydrogenase 1C (375 aa).

Ser2 bears the N-acetylserine mark. Ser23 is modified (phosphoserine). Positions 47, 68, 98, 101, 104, 112, and 175 each coordinate Zn(2+). NAD(+) is bound by residues 200 to 205 (GLGGVG), Asp224, Lys229, Ile270, 293 to 295 (VGV), 318 to 320 (AIF), and Arg370.

Belongs to the zinc-containing alcohol dehydrogenase family. Dimer of identical or non-identical chains of class I alcohol dehydrogenase: ADH1A, ADH1B, and ADH1C. Requires Zn(2+) as cofactor.

The protein resides in the cytoplasm. The catalysed reaction is a primary alcohol + NAD(+) = an aldehyde + NADH + H(+). The enzyme catalyses ethanol + NAD(+) = acetaldehyde + NADH + H(+). Alcohol dehydrogenase. Exhibits high activity for ethanol oxidation and plays a major role in ethanol catabolism. The chain is Alcohol dehydrogenase 1C (ADH1C) from Homo sapiens (Human).